Here is a 186-residue protein sequence, read N- to C-terminus: dCTP deaminase (186 aa).

Residue 107 to 112 (KSTYAR) coordinates dCTP. Catalysis depends on glutamate 133, which acts as the Proton donor/acceptor. Positions 152, 166, and 176 each coordinate dCTP.

This sequence belongs to the dCTP deaminase family. As to quaternary structure, homotrimer.

It catalyses the reaction dCTP + H2O + H(+) = dUTP + NH4(+). Its pathway is pyrimidine metabolism; dUMP biosynthesis; dUMP from dCTP (dUTP route): step 1/2. Functionally, catalyzes the deamination of dCTP to dUTP. This Campylobacter jejuni subsp. jejuni serotype O:2 (strain ATCC 700819 / NCTC 11168) protein is dCTP deaminase.